A 77-amino-acid polypeptide reads, in one-letter code: UPF0401 protein c3666 (77 aa).

This sequence belongs to the UPF0401 family.

The polypeptide is UPF0401 protein c3666 (Escherichia coli O6:H1 (strain CFT073 / ATCC 700928 / UPEC)).